A 150-amino-acid chain; its full sequence is Nucleoside diphosphate kinase (150 aa).

Residues Lys-9, Phe-57, Arg-85, Thr-91, Arg-102, and Asn-112 each contribute to the ATP site. The active-site Pros-phosphohistidine intermediate is His-115.

The protein belongs to the NDK family. As to quaternary structure, homotetramer. The cofactor is Mg(2+).

It is found in the cytoplasm. It carries out the reaction a 2'-deoxyribonucleoside 5'-diphosphate + ATP = a 2'-deoxyribonucleoside 5'-triphosphate + ADP. The enzyme catalyses a ribonucleoside 5'-diphosphate + ATP = a ribonucleoside 5'-triphosphate + ADP. Its function is as follows. Major role in the synthesis of nucleoside triphosphates other than ATP. The ATP gamma phosphate is transferred to the NDP beta phosphate via a ping-pong mechanism, using a phosphorylated active-site intermediate. This is Nucleoside diphosphate kinase from Staphylococcus carnosus (strain TM300).